The sequence spans 152 residues: Xanthine-guanine phosphoribosyltransferase (152 aa).

5-phospho-alpha-D-ribose 1-diphosphate contacts are provided by residues 37–38 and 88–96; these read RG and DDLVDTGGT. Asp-89 is a Mg(2+) binding site. Residues Asp-92 and Ile-135 each coordinate guanine. Positions 92 and 135 each coordinate xanthine. Residues 92 to 96 and 134 to 135 each bind GMP; these read DTGGT and WI.

It belongs to the purine/pyrimidine phosphoribosyltransferase family. XGPT subfamily. In terms of assembly, homotetramer. Mg(2+) is required as a cofactor.

Its subcellular location is the cell inner membrane. It carries out the reaction GMP + diphosphate = guanine + 5-phospho-alpha-D-ribose 1-diphosphate. The enzyme catalyses XMP + diphosphate = xanthine + 5-phospho-alpha-D-ribose 1-diphosphate. The catalysed reaction is IMP + diphosphate = hypoxanthine + 5-phospho-alpha-D-ribose 1-diphosphate. The protein operates within purine metabolism; GMP biosynthesis via salvage pathway; GMP from guanine: step 1/1. Its pathway is purine metabolism; XMP biosynthesis via salvage pathway; XMP from xanthine: step 1/1. Functionally, purine salvage pathway enzyme that catalyzes the transfer of the ribosyl-5-phosphate group from 5-phospho-alpha-D-ribose 1-diphosphate (PRPP) to the N9 position of the 6-oxopurines guanine and xanthine to form the corresponding ribonucleotides GMP (guanosine 5'-monophosphate) and XMP (xanthosine 5'-monophosphate), with the release of PPi. To a lesser extent, also acts on hypoxanthine. The protein is Xanthine-guanine phosphoribosyltransferase of Yersinia enterocolitica serotype O:8 / biotype 1B (strain NCTC 13174 / 8081).